The primary structure comprises 371 residues: Chaperone protein DnaJ (371 aa).

The J domain maps to 5-70; sequence CYYEILNISK…SKRSRYDQFG (66 aa). The CR-type zinc-finger motif lies at 127–204; the sequence is GVEKEITIPR…CYGNGKVKKQ (78 aa). Positions 140, 143, 156, 159, 178, 181, 192, and 195 each coordinate Zn(2+). 4 CXXCXGXG motif repeats span residues 140–147, 156–163, 178–185, and 192–199; these read CDSCDGTG, CHACHGQG, CPVCNGTG, and CDACYGNG.

Belongs to the DnaJ family. In terms of assembly, homodimer. Zn(2+) serves as cofactor.

The protein resides in the cytoplasm. In terms of biological role, participates actively in the response to hyperosmotic and heat shock by preventing the aggregation of stress-denatured proteins and by disaggregating proteins, also in an autonomous, DnaK-independent fashion. Unfolded proteins bind initially to DnaJ; upon interaction with the DnaJ-bound protein, DnaK hydrolyzes its bound ATP, resulting in the formation of a stable complex. GrpE releases ADP from DnaK; ATP binding to DnaK triggers the release of the substrate protein, thus completing the reaction cycle. Several rounds of ATP-dependent interactions between DnaJ, DnaK and GrpE are required for fully efficient folding. Also involved, together with DnaK and GrpE, in the DNA replication of plasmids through activation of initiation proteins. The sequence is that of Chaperone protein DnaJ from Francisella tularensis subsp. holarctica (strain LVS).